A 62-amino-acid polypeptide reads, in one-letter code: Large ribosomal subunit protein eL24 (62 aa).

Zn(2+) contacts are provided by cysteine 7, cysteine 10, cysteine 33, and cysteine 37. A C4-type zinc finger spans residues 7–37 (CSFCGREIEPGTGIMYVKNDGSILWFCSRKC).

Belongs to the eukaryotic ribosomal protein eL24 family. As to quaternary structure, part of the 50S ribosomal subunit. Forms a cluster with proteins L3 and L14. Requires Zn(2+) as cofactor.

Its function is as follows. Binds to the 23S rRNA. In Staphylothermus marinus (strain ATCC 43588 / DSM 3639 / JCM 9404 / F1), this protein is Large ribosomal subunit protein eL24.